Here is a 616-residue protein sequence, read N- to C-terminus: Elongation factor 4 (616 aa).

The region spanning glutamate 17–valine 203 is the tr-type G domain. GTP contacts are provided by residues aspartate 29–threonine 34 and asparagine 150–aspartate 153.

Belongs to the TRAFAC class translation factor GTPase superfamily. Classic translation factor GTPase family. LepA subfamily.

Its subcellular location is the cell membrane. It catalyses the reaction GTP + H2O = GDP + phosphate + H(+). Its function is as follows. Required for accurate and efficient protein synthesis under certain stress conditions. May act as a fidelity factor of the translation reaction, by catalyzing a one-codon backward translocation of tRNAs on improperly translocated ribosomes. Back-translocation proceeds from a post-translocation (POST) complex to a pre-translocation (PRE) complex, thus giving elongation factor G a second chance to translocate the tRNAs correctly. Binds to ribosomes in a GTP-dependent manner. This Corynebacterium jeikeium (strain K411) protein is Elongation factor 4.